Consider the following 799-residue polypeptide: E3 UFM1-protein ligase 1 homolog (799 aa).

The segment at 429–483 (TTTTTTTQPSKKKDNLINSDDDDNQDNNKKSSKGKNKKSKQQQSSIQKLINDSED) is disordered. The span at 458-468 (KSSKGKNKKSK) shows a compositional bias: basic residues. Residues 469–478 (QQQSSIQKLI) show a composition bias toward low complexity.

The protein belongs to the UFL1 family.

Its function is as follows. E3 UFM1-protein ligase that mediates ufmylation of target proteins. The sequence is that of E3 UFM1-protein ligase 1 homolog from Dictyostelium discoideum (Social amoeba).